The primary structure comprises 591 residues: MAMGAVLSSRTFASPLSSSGKQHPPQNNKCTCSSPPTRDKFSRLTTRTTIFQVSNYSRSTSMERFQLSARFHQPVVDSSTNYLTRWFYNANLKRRRIECFLTSDPINTGWLKPRRWDNFTSLDTACVQPDYKIPVRTRADCKAEQYEITGSPLSPSDVPAEAVLIGDTNEISPWWQQFPKRWTVVLLCFFSFLLCNMDRVNMSIAILPMSSEFGWSPATVGLIQSSFFWGYLLTQILGGIWADRFGGKVVLGFGVVWWSIATVLTPLAAKIGLPFLLVMRAFMGIGEGVAMPAMNNILSKWVPVSERSRSLALVYSGMYLGSVTGLAFSPLLISRFGWPSVFYAFGSLGSVWFALWQRKAHSSPSEDPELSKAEKRYILGGSTLKEPVTSIPWKLILSKPPVWALIVSHFCHNWGTFILLTWMPTYYNQVLKFNLTESGLLCVLPWLTMAIFANIGGWIADTLVGRGVSITNVRKIMQSIGFLGPALFLTLLSKVRTPAMAVLCMACSQGSDAFSQSGLYSNHQDIGPRYAGVLLGLSNTAGVLAGVFGTAATGYILQKGSWDSVFQVAVVLYIVGTVVWNVFSTGEKVLE.

The interval 1-38 (MAMGAVLSSRTFASPLSSSGKQHPPQNNKCTCSSPPTR) is disordered. Residues 1 to 76 (MAMGAVLSSR…LSARFHQPVV (76 aa)) constitute a chloroplast transit peptide. Residues 8–36 (SSRTFASPLSSSGKQHPPQNNKCTCSSPP) are compositionally biased toward polar residues. Transmembrane regions (helical) follow at residues 184-204 (VVLLCFFSFLLCNMDRVNMSI), 220-240 (VGLIQSSFFWGYLLTQILGGI), 249-269 (VVLGFGVVWWSIATVLTPLAA), 271-291 (IGLPFLLVMRAFMGIGEGVAM), 313-333 (LVYSGMYLGSVTGLAFSPLLI), 336-356 (FGWPSVFYAFGSLGSVWFALW), 402-422 (VWALIVSHFCHNWGTFILLTW), 440-460 (LLCVLPWLTMAIFANIGGWIA), 475-495 (KIMQSIGFLGPALFLTLLSKV), 531-551 (AGVLLGLSNTAGVLAGVFGTA), and 565-585 (VFQVAVVLYIVGTVVWNVFST).

The protein belongs to the major facilitator superfamily. Sodium/anion cotransporter (TC 2.A.1.14) family.

Its subcellular location is the plastid. It is found in the chloroplast membrane. Its function is as follows. Probable anion transporter. This is Probable anion transporter 4, chloroplastic (PHT4;4) from Oryza sativa subsp. japonica (Rice).